Consider the following 68-residue polypeptide: Large ribosomal subunit protein bL33c (68 aa).

This sequence belongs to the bacterial ribosomal protein bL33 family.

The protein localises to the plastid. It localises to the chloroplast. This Nymphaea alba (White water-lily) protein is Large ribosomal subunit protein bL33c.